Consider the following 131-residue polypeptide: MHRTFLFSKIHHCTLTETNLEYVGSISIDQTLLDAAGIVPYEQVQVVNMNNGERLVTYAIPAPADSGAVELNGAAARLGTRGDRVIIMTYAQLTSEEIEGFEPRVVLVDQENRVIEDAPVVNASTPELCLT.

Serine 25 (schiff-base intermediate with substrate; via pyruvic acid) is an active-site residue. The residue at position 25 (serine 25) is a Pyruvic acid (Ser). Threonine 57 contributes to the substrate binding site. Tyrosine 58 (proton donor) is an active-site residue. Glycine 73–alanine 75 contacts substrate.

The protein belongs to the PanD family. As to quaternary structure, heterooctamer of four alpha and four beta subunits. Requires pyruvate as cofactor. In terms of processing, is synthesized initially as an inactive proenzyme, which is activated by self-cleavage at a specific serine bond to produce a beta-subunit with a hydroxyl group at its C-terminus and an alpha-subunit with a pyruvoyl group at its N-terminus.

The protein resides in the cytoplasm. The catalysed reaction is L-aspartate + H(+) = beta-alanine + CO2. It functions in the pathway cofactor biosynthesis; (R)-pantothenate biosynthesis; beta-alanine from L-aspartate: step 1/1. Catalyzes the pyruvoyl-dependent decarboxylation of aspartate to produce beta-alanine. The polypeptide is Aspartate 1-decarboxylase (Acaryochloris marina (strain MBIC 11017)).